We begin with the raw amino-acid sequence, 311 residues long: tRNA dimethylallyltransferase (311 aa).

16-23 is an ATP binding site; the sequence is GPTASGKS. 18-23 contacts substrate; that stretch reads TASGKS. The segment at 41 to 44 is interaction with substrate tRNA; sequence DSMQ.

The protein belongs to the IPP transferase family. In terms of assembly, monomer. It depends on Mg(2+) as a cofactor.

It carries out the reaction adenosine(37) in tRNA + dimethylallyl diphosphate = N(6)-dimethylallyladenosine(37) in tRNA + diphosphate. In terms of biological role, catalyzes the transfer of a dimethylallyl group onto the adenine at position 37 in tRNAs that read codons beginning with uridine, leading to the formation of N6-(dimethylallyl)adenosine (i(6)A). The chain is tRNA dimethylallyltransferase from Geobacter sulfurreducens (strain ATCC 51573 / DSM 12127 / PCA).